The primary structure comprises 105 residues: Insulin (105 aa).

The N-terminal stretch at 1–24 (MALWTRLRPLLALLALWPPPPARA) is a signal peptide. 3 disulfides stabilise this stretch: cysteine 31–cysteine 91, cysteine 43–cysteine 104, and cysteine 90–cysteine 95. A propeptide spans 57–82 (EVEGPQVGALELAGGPGAGGLEGPPQ) (c peptide).

This sequence belongs to the insulin family. Heterodimer of a B chain and an A chain linked by two disulfide bonds.

It localises to the secreted. Insulin decreases blood glucose concentration. It increases cell permeability to monosaccharides, amino acids and fatty acids. It accelerates glycolysis, the pentose phosphate cycle, and glycogen synthesis in liver. The protein is Insulin (INS) of Bos taurus (Bovine).